The sequence spans 106 residues: Large ribosomal subunit protein uL24 (106 aa).

Belongs to the universal ribosomal protein uL24 family. As to quaternary structure, part of the 50S ribosomal subunit.

In terms of biological role, one of two assembly initiator proteins, it binds directly to the 5'-end of the 23S rRNA, where it nucleates assembly of the 50S subunit. One of the proteins that surrounds the polypeptide exit tunnel on the outside of the subunit. The protein is Large ribosomal subunit protein uL24 of Dechloromonas aromatica (strain RCB).